The following is a 494-amino-acid chain: Cysteine--tRNA ligase (494 aa).

Cys-29 contributes to the Zn(2+) binding site. A 'HIGH' region motif is present at residues 31–41 (VTVYDHCHIGH). The Zn(2+) site is built by Cys-209, His-234, and Glu-238. The short motif at 266–270 (KMSKS) is the 'KMSKS' region element. ATP is bound at residue Lys-269.

Belongs to the class-I aminoacyl-tRNA synthetase family. In terms of assembly, monomer. Requires Zn(2+) as cofactor.

Its subcellular location is the cytoplasm. The catalysed reaction is tRNA(Cys) + L-cysteine + ATP = L-cysteinyl-tRNA(Cys) + AMP + diphosphate. This Geotalea uraniireducens (strain Rf4) (Geobacter uraniireducens) protein is Cysteine--tRNA ligase.